Reading from the N-terminus, the 261-residue chain is Aquaporin-8 (261 aa).

Over 1–36 (MSGETPMCSIDLSEVKAKETRMAGRFRVSWYEQYIQ) the chain is Cytoplasmic. A helical membrane pass occupies residues 37 to 57 (PCVVELLGSALFIFIGCLSVI). The residue at position 53 (Cys53) is a Cysteine persulfide. At Cys53 the chain carries Cysteine sulfenic acid (-SOH). Topologically, residues 58–84 (ENSPDTGLLQPALAHGLALGLIIATLG) are extracellular. Residues 85–105 (NISGGHFNPAVSLAVTVIGGL) traverse the membrane as a helical segment. The short motif at 92 to 94 (NPA) is the NPA 1 element. At 106–107 (KT) the chain is on the cytoplasmic side. The chain crosses the membrane as a helical span at residues 108–128 (MLLIPYWISQIFGGLIGAALA). The Extracellular segment spans residues 129-156 (KVVSPEERFWNASGAAFAIVQEQEQVTE). Residue Asn139 is glycosylated (N-linked (GlcNAc...) asparagine). A helical transmembrane segment spans residues 157–177 (ALGVEIILTILLVLAVCMGAV). Residues 178–183 (NEKTMG) lie on the Cytoplasmic side of the membrane. The helical transmembrane segment at 184–204 (PLAPFSIGFSVIVDILAGGGI) threads the bilayer. At 205–228 (SGACMNPARAFGPAVVAGYWDFHW) the chain is on the extracellular side. Residues 210–212 (NPA) carry the NPA 2 motif. The chain crosses the membrane as a helical span at residues 229-249 (IYWLGPLLAGLFVGLLIRLFI). Over 250–261 (GDEKTRLILKSR) the chain is Cytoplasmic.

The protein belongs to the MIP/aquaporin (TC 1.A.8) family. Post-translationally, sulfenylation at Cys-53(C53-SOH) when hydrogen peroxide flows through the AQP8 channel, making it susceptible to hydrogen sulfide produced by CBS. Persulfidation at Cys-53 is required to gate AQP8 channel; under stress condition, hydrogen peroxide accumulates in the cell leading to CBS activation that produces hydrogen sulfide inducing persulfidation of oxidized Cys-53 (C53-SOH). In terms of processing, N-glycosylated.

The protein localises to the cell membrane. The protein resides in the mitochondrion inner membrane. It localises to the apical cell membrane. It is found in the basolateral cell membrane. Its subcellular location is the smooth endoplasmic reticulum membrane. The enzyme catalyses H2O(in) = H2O(out). It carries out the reaction H2O2(out) = H2O2(in). The catalysed reaction is formamide(out) = formamide(in). It catalyses the reaction methylamine(out) = methylamine(in). With respect to regulation, reversibly gated by a two-step sulfenylation-persulfidation process in cells undergoing diverse stresses. Functionally, channel that allows the facilitated permeation of water and uncharged molecules, such as hydrogen peroxide and the neutral form of ammonia (NH3), through cellular membranes such as plasma membrane, inner mitochondrial membrane and endoplasmic reticulum membrane of several tissues. The transport of ammonia neutral form induces a parallel transport of proton, at alkaline pH when the concentration of ammonia is high. However, it is unclear whether the transport of proton takes place via the aquaporin or via an endogenous pathway. Also, may transport ammonia analogs such as formamide and methylamine, a transport favourited at basic pH due to the increase of unprotonated (neutral) form, which is expected to favor diffusion. Does not transport urea or glycerol. The water transport mechanism is mercury- and copper-sensitive and passive in response to osmotic driving forces. At the canicular plasma membrane, mediates the osmotic transport of water toward the bile canaliculus and facilitates the cAMP-induced bile canalicular water secretion, a process involved in bile formation. In addition, mediates the hydrogen peroxide release from hepatocyte mitochondria that modulates the SREBF2-mediated cholesterol synthesis and facilitates the mitochondrial ammonia uptake which is metabolized into urea, mainly under glucagon stimulation. In B cells, transports the CYBB-generated hydrogen peroxide from the external leaflet of the plasma membrane to the cytosol to promote B cell activation and differentiation for signal amplification. In the small intestine and colon system, mediates water transport through mitochondria and apical membrane of epithelial cells. May play an important role in the adaptive response of proximal tubule cells to acidosis possibly facilitating mitochondrial ammonia transport. The chain is Aquaporin-8 from Notomys alexis (Spinifex hopping mouse).